A 218-amino-acid polypeptide reads, in one-letter code: ATP phosphoribosyltransferase (218 aa).

It belongs to the ATP phosphoribosyltransferase family. Short subfamily. Heteromultimer composed of HisG and HisZ subunits.

It is found in the cytoplasm. It carries out the reaction 1-(5-phospho-beta-D-ribosyl)-ATP + diphosphate = 5-phospho-alpha-D-ribose 1-diphosphate + ATP. It functions in the pathway amino-acid biosynthesis; L-histidine biosynthesis; L-histidine from 5-phospho-alpha-D-ribose 1-diphosphate: step 1/9. Catalyzes the condensation of ATP and 5-phosphoribose 1-diphosphate to form N'-(5'-phosphoribosyl)-ATP (PR-ATP). Has a crucial role in the pathway because the rate of histidine biosynthesis seems to be controlled primarily by regulation of HisG enzymatic activity. In Burkholderia thailandensis (strain ATCC 700388 / DSM 13276 / CCUG 48851 / CIP 106301 / E264), this protein is ATP phosphoribosyltransferase.